A 70-amino-acid chain; its full sequence is Small ribosomal subunit protein bS21B (70 aa).

It belongs to the bacterial ribosomal protein bS21 family.

The protein is Small ribosomal subunit protein bS21B of Burkholderia thailandensis (strain ATCC 700388 / DSM 13276 / CCUG 48851 / CIP 106301 / E264).